Consider the following 499-residue polypeptide: Cryptochrome-1 (499 aa).

FAD is bound by residues Arg-190, Ser-218, Ser-220, Gln-261, His-328, 360–362, Cys-366, and Asn-369; that span reads DAD.

It belongs to the DNA photolyase class-1 family. Interacts with tim and per; promoted by light conditions. FAD is required as a cofactor.

It localises to the cytoplasm. The protein resides in the perinuclear region. The protein localises to the nucleus. In terms of biological role, blue light-dependent regulator that is the input of the circadian feedback loop. Has no photolyase activity for cyclobutane pyrimidine dimers or 6-4 photoproducts. Regulation of expression by light suggests a role in photoreception for locomotor activity rhythms. Functions, together with per, as a transcriptional repressor required for the oscillation of peripheral circadian clocks and for the correct specification of clock cells. Genes directly activated by the transcription factors Clock (Clk) and cycle (cyc) are repressed by cry. In Culex quinquefasciatus (Southern house mosquito), this protein is Cryptochrome-1.